The sequence spans 335 residues: Phosphate acyltransferase (335 aa).

This sequence belongs to the PlsX family. Homodimer. Probably interacts with PlsY.

The protein localises to the cytoplasm. It carries out the reaction a fatty acyl-[ACP] + phosphate = an acyl phosphate + holo-[ACP]. Its pathway is lipid metabolism; phospholipid metabolism. Functionally, catalyzes the reversible formation of acyl-phosphate (acyl-PO(4)) from acyl-[acyl-carrier-protein] (acyl-ACP). This enzyme utilizes acyl-ACP as fatty acyl donor, but not acyl-CoA. In Clostridium botulinum (strain ATCC 19397 / Type A), this protein is Phosphate acyltransferase.